Reading from the N-terminus, the 575-residue chain is Proline--tRNA ligase (575 aa).

This sequence belongs to the class-II aminoacyl-tRNA synthetase family. ProS type 1 subfamily. In terms of assembly, homodimer.

The protein localises to the cytoplasm. It carries out the reaction tRNA(Pro) + L-proline + ATP = L-prolyl-tRNA(Pro) + AMP + diphosphate. Catalyzes the attachment of proline to tRNA(Pro) in a two-step reaction: proline is first activated by ATP to form Pro-AMP and then transferred to the acceptor end of tRNA(Pro). As ProRS can inadvertently accommodate and process non-cognate amino acids such as alanine and cysteine, to avoid such errors it has two additional distinct editing activities against alanine. One activity is designated as 'pretransfer' editing and involves the tRNA(Pro)-independent hydrolysis of activated Ala-AMP. The other activity is designated 'posttransfer' editing and involves deacylation of mischarged Ala-tRNA(Pro). The misacylated Cys-tRNA(Pro) is not edited by ProRS. The polypeptide is Proline--tRNA ligase (Desulfitobacterium hafniense (strain DSM 10664 / DCB-2)).